We begin with the raw amino-acid sequence, 115 residues long: MAIIPKNYARLESGYREKALKLFPWVCGRCSREFVYSNLRELTVHHIDHDHTNNPEDGSNWELLCLYCHDHEHSKYTEADQYGSTVIAGEDAQKDVGEATYNPFADLKAMMNKKK.

The HNH domain maps to 27–75 (CGRCSREFVYSNLRELTVHHIDHDHTNNPEDGSNWELLCLYCHDHEHSK).

The protein belongs to the HNH nuclease family.

The sequence is that of Putative HNH nuclease YajD (yajD) from Salmonella typhi.